The chain runs to 421 residues: Gamma-glutamyl phosphate reductase (421 aa).

It belongs to the gamma-glutamyl phosphate reductase family.

The protein localises to the cytoplasm. It catalyses the reaction L-glutamate 5-semialdehyde + phosphate + NADP(+) = L-glutamyl 5-phosphate + NADPH + H(+). Its pathway is amino-acid biosynthesis; L-proline biosynthesis; L-glutamate 5-semialdehyde from L-glutamate: step 2/2. In terms of biological role, catalyzes the NADPH-dependent reduction of L-glutamate 5-phosphate into L-glutamate 5-semialdehyde and phosphate. The product spontaneously undergoes cyclization to form 1-pyrroline-5-carboxylate. This is Gamma-glutamyl phosphate reductase from Acinetobacter baumannii (strain ACICU).